Reading from the N-terminus, the 122-residue chain is Putative TLX1 neighbor protein (122 aa).

The segment at 21–122 (SLLSQEAMGP…LGGGRGQRGQ (102 aa)) is disordered. Residues 113 to 122 (LGGGRGQRGQ) show a composition bias toward gly residues.

This chain is Putative TLX1 neighbor protein (TLX1NB), found in Homo sapiens (Human).